A 204-amino-acid polypeptide reads, in one-letter code: High frequency lysogenization protein HflD homolog (204 aa).

It belongs to the HflD family.

It is found in the cytoplasm. It localises to the cell inner membrane. This Shewanella woodyi (strain ATCC 51908 / MS32) protein is High frequency lysogenization protein HflD homolog.